The sequence spans 230 residues: uncharacterized protein (230 aa).

A run of 7 helical transmembrane segments spans residues 34–54 (FFAGSLLLATIGALLGLMNFQ), 56–76 (VVQYKWVFFIAEIAAFFGLMF), 87–107 (MLFAFTSLSGVTLVPLLGMVI), 111–131 (GLGAIWQALGMTTIVFGLMSV), 146–166 (MLFIALIVVVVCSLINLFLGS), 167–187 (PMFQVVIAGASAILFSLYIAY), and 205–225 (VSLYLDFLNVFISILQIIGIF).

The protein belongs to the BI1 family.

Its subcellular location is the cell membrane. This is an uncharacterized protein from Helicobacter pylori (strain ATCC 700392 / 26695) (Campylobacter pylori).